The sequence spans 150 residues: FAD synthase (150 aa).

ATP contacts are provided by residues threonine 11–phenylalanine 12, histidine 16–histidine 19, aspartate 96, and tyrosine 124.

It belongs to the archaeal FAD synthase family. As to quaternary structure, homodimer. A divalent metal cation is required as a cofactor.

The enzyme catalyses FMN + ATP + H(+) = FAD + diphosphate. It functions in the pathway cofactor biosynthesis; FAD biosynthesis; FAD from FMN: step 1/1. Catalyzes the transfer of the AMP portion of ATP to flavin mononucleotide (FMN) to produce flavin adenine dinucleotide (FAD) coenzyme. This Methanococcus maripaludis (strain DSM 14266 / JCM 13030 / NBRC 101832 / S2 / LL) protein is FAD synthase.